The primary structure comprises 1090 residues: DNA damage-binding protein 1 (1090 aa).

The protein belongs to the DDB1 family. Component of the UV-DDB complex, which is composed of DDB1 and DDB2. Expressed in proliferating tissues. Highly expressed in shoot apical meristem (SAM). Expressed in roots, young leaves, flag leaves, and panicles. Not detected in mature leaves.

The protein localises to the nucleus. Functionally, required for DNA repair. Binds to DDB2 to form the UV-damaged DNA-binding protein complex (the UV-DDB complex). The UV-DDB complex may recognize UV-induced DNA damage and recruit proteins of the nucleotide excision repair pathway (the NER pathway) to initiate DNA repair. May function as the substrate recognition module for a DCX (DDB1-CUL4-X-box) E3 ubiquitin-protein ligase complex. The protein is DNA damage-binding protein 1 of Oryza sativa subsp. japonica (Rice).